Here is a 344-residue protein sequence, read N- to C-terminus: MSPQGPAVLSLGSLCLDTNQAPNWTGLQTLLQQLPPQDIDERYCLALGEEERAELQLFCARRKQEALGQGVARLVLPKLEGHTCEKCRELLKPGEYGVFAARAGEQRCWHQPCFACQACGQALINLIYFYHDGQLYCGRHHAELLRPRCPACDQLIFSWRCTEAEGQRWHENHFCCQDCAGPLGGGRYALPGGSPCCPSCFENRYSDAGSSWAGALEGQAFLGETGLDRTEGRDQTSVNSATLSRTLLAAAGGSSLQTQRGLPGSSPQQENRPGDKAEAPKGQEQCRLETIRDPKDTPFSTCSSSSDSEPEGFFLGERLPQSWKTPGSLQAEDSNASKTHCTMC.

One can recognise a PET domain in the interval 1–81 (MSPQGPAVLS…ARLVLPKLEG (81 aa)). 2 consecutive LIM zinc-binding domains span residues 82–147 (HTCE…LLRP) and 148–207 (RCPA…RYSD). A disordered region spans residues 253 to 344 (GSSLQTQRGL…NASKTHCTMC (92 aa)). Residues 257–271 (QTQRGLPGSSPQQEN) show a composition bias toward polar residues. Basic and acidic residues predominate over residues 272–296 (RPGDKAEAPKGQEQCRLETIRDPKD). Positions 322-344 (SWKTPGSLQAEDSNASKTHCTMC) are enriched in polar residues.

Belongs to the prickle / espinas / testin family. Expressed in a broad range of normal tissues as well as in hepatocellular carcinoma, breast cancer and prostate cancer tissues.

In Homo sapiens (Human), this protein is Prickle-like protein 4 (PRICKLE4).